The primary structure comprises 211 residues: Pyridoxine/pyridoxamine 5'-phosphate oxidase (211 aa).

Substrate-binding positions include 7 to 10 and lysine 65; that span reads RREY. Residues 60 to 65, 75 to 76, arginine 81, lysine 82, and glutamine 104 contribute to the FMN site; these read RIVLLK and YT. Substrate is bound by residues tyrosine 122, arginine 126, and serine 130. Residues 139-140 and tryptophan 184 contribute to the FMN site; that span reads QS. 190-192 provides a ligand contact to substrate; the sequence is RLH. Residue arginine 194 coordinates FMN.

This sequence belongs to the pyridoxamine 5'-phosphate oxidase family. As to quaternary structure, homodimer. The cofactor is FMN.

The enzyme catalyses pyridoxamine 5'-phosphate + O2 + H2O = pyridoxal 5'-phosphate + H2O2 + NH4(+). It catalyses the reaction pyridoxine 5'-phosphate + O2 = pyridoxal 5'-phosphate + H2O2. It functions in the pathway cofactor metabolism; pyridoxal 5'-phosphate salvage; pyridoxal 5'-phosphate from pyridoxamine 5'-phosphate: step 1/1. The protein operates within cofactor metabolism; pyridoxal 5'-phosphate salvage; pyridoxal 5'-phosphate from pyridoxine 5'-phosphate: step 1/1. Functionally, catalyzes the oxidation of either pyridoxine 5'-phosphate (PNP) or pyridoxamine 5'-phosphate (PMP) into pyridoxal 5'-phosphate (PLP). This chain is Pyridoxine/pyridoxamine 5'-phosphate oxidase, found in Vibrio vulnificus (strain CMCP6).